The sequence spans 181 residues: ATP synthase subunit delta (181 aa).

This sequence belongs to the ATPase delta chain family. In terms of assembly, F-type ATPases have 2 components, F(1) - the catalytic core - and F(0) - the membrane proton channel. F(1) has five subunits: alpha(3), beta(3), gamma(1), delta(1), epsilon(1). F(0) has three main subunits: a(1), b(2) and c(10-14). The alpha and beta chains form an alternating ring which encloses part of the gamma chain. F(1) is attached to F(0) by a central stalk formed by the gamma and epsilon chains, while a peripheral stalk is formed by the delta and b chains.

The protein localises to the cell inner membrane. Its function is as follows. F(1)F(0) ATP synthase produces ATP from ADP in the presence of a proton or sodium gradient. F-type ATPases consist of two structural domains, F(1) containing the extramembraneous catalytic core and F(0) containing the membrane proton channel, linked together by a central stalk and a peripheral stalk. During catalysis, ATP synthesis in the catalytic domain of F(1) is coupled via a rotary mechanism of the central stalk subunits to proton translocation. In terms of biological role, this protein is part of the stalk that links CF(0) to CF(1). It either transmits conformational changes from CF(0) to CF(1) or is implicated in proton conduction. The chain is ATP synthase subunit delta from Chlorobaculum tepidum (strain ATCC 49652 / DSM 12025 / NBRC 103806 / TLS) (Chlorobium tepidum).